The primary structure comprises 388 residues: Chaperone protein DnaJ (388 aa).

Residues 5–69 enclose the J domain; that stretch reads DYYDVLGVDK…QKKAQYDQFG (65 aa). Residues 145–227 form a CR-type zinc finger; it reads GKKTDITYTR…CHGKGTIDKK (83 aa). 8 residues coordinate Zn(2+): C158, C161, C175, C178, C201, C204, C215, and C218. CXXCXGXG motif repeat units lie at residues 158-165, 175-182, 201-208, and 215-222; these read CPTCDGSG, CDKCHGTG, CDKCGGRG, and CQTCHGKG.

Belongs to the DnaJ family. As to quaternary structure, homodimer. Requires Zn(2+) as cofactor.

The protein localises to the cytoplasm. In terms of biological role, participates actively in the response to hyperosmotic and heat shock by preventing the aggregation of stress-denatured proteins and by disaggregating proteins, also in an autonomous, DnaK-independent fashion. Unfolded proteins bind initially to DnaJ; upon interaction with the DnaJ-bound protein, DnaK hydrolyzes its bound ATP, resulting in the formation of a stable complex. GrpE releases ADP from DnaK; ATP binding to DnaK triggers the release of the substrate protein, thus completing the reaction cycle. Several rounds of ATP-dependent interactions between DnaJ, DnaK and GrpE are required for fully efficient folding. Also involved, together with DnaK and GrpE, in the DNA replication of plasmids through activation of initiation proteins. This is Chaperone protein DnaJ from Lactobacillus gasseri (strain ATCC 33323 / DSM 20243 / BCRC 14619 / CIP 102991 / JCM 1131 / KCTC 3163 / NCIMB 11718 / NCTC 13722 / AM63).